We begin with the raw amino-acid sequence, 306 residues long: Mitochondrial basic amino acids transporter (306 aa).

The next 6 membrane-spanning stretches (helical) occupy residues 2-22 (ALDF…GHPF), 61-81 (GLGS…GVQG), 96-116 (FLAG…MELA), 153-172 (GMVS…FLTY), 187-207 (LLVP…WLST), and 255-275 (LLRA…VLTY). Solcar repeat units follow at residues 2-86 (ALDF…TLRA), 90-178 (DSPL…MTRA), and 190-275 (PKLL…VLTY). Positions 284–306 (DSEAALGTSPTPAGSALAQPSSL) are disordered. The segment covering 291–306 (TSPTPAGSALAQPSSL) has biased composition (polar residues).

It belongs to the mitochondrial carrier (TC 2.A.29) family. In terms of tissue distribution, widely expressed, with highest levels in the brain, including cortex, cerebellum, hippocampus and hypothalamus, and moderate levels in liver, kidney, heart and testis.

Its subcellular location is the mitochondrion inner membrane. The catalysed reaction is L-lysine(out) + L-arginine(in) = L-lysine(in) + L-arginine(out). The enzyme catalyses L-histidine(out) + L-arginine(in) = L-histidine(in) + L-arginine(out). It catalyses the reaction L-ornithine(in) + L-arginine(out) = L-ornithine(out) + L-arginine(in). It carries out the reaction L-homoarginine(in) + L-arginine(out) = L-homoarginine(out) + L-arginine(in). The catalysed reaction is N(omega)-methyl-L-arginine(in) + L-arginine(out) = N(omega)-methyl-L-arginine(out) + L-arginine(in). The enzyme catalyses L-arginine(in) = L-arginine(out). It catalyses the reaction L-lysine(in) = L-lysine(out). It carries out the reaction L-ornithine(in) = L-ornithine(out). The catalysed reaction is L-histidine(out) = L-histidine(in). Its function is as follows. Mitochondrial transporter of arginine, lysine, homoarginine, methylarginine. Transports with a much lesser extent, ornithine and histidine. Does not transport carnitine nor acylcarnitines. Functions by both counter-exchange and uniport mechanisms. Plays a physiological role in the import of basic amino acids into mitochondria for mitochondrial protein synthesis and amino acid degradation. The chain is Mitochondrial basic amino acids transporter (Slc25a29) from Mus musculus (Mouse).